Reading from the N-terminus, the 117-residue chain is Protein Wnt-6 (117 aa).

Serine 1 carries O-palmitoleoyl serine; by PORCN lipidation. Cysteine 83 and cysteine 98 are disulfide-bonded. A glycan (N-linked (GlcNAc...) asparagine) is linked at asparagine 84.

Belongs to the Wnt family. In terms of processing, palmitoleoylation is required for efficient binding to frizzled receptors. Depalmitoleoylation leads to Wnt signaling pathway inhibition.

The protein localises to the secreted. Its subcellular location is the extracellular space. It is found in the extracellular matrix. Its function is as follows. Ligand for members of the frizzled family of seven transmembrane receptors. Probable developmental protein. May be a signaling molecule which affects the development of discrete regions of tissues. Is likely to signal over only few cell diameters. The protein is Protein Wnt-6 (wnt6) of Thunnus thynnus (Atlantic bluefin tuna).